Reading from the N-terminus, the 123-residue chain is MPTIKQLIRNTRQPMRNVTKSPALRGCPQRRGTCTRVYTITPKKPNSALRKVARVRLTSGFEITAYIPGIGHNLQEHSVVLVRGGRVKDLPGVRYHIVRGTLDAVGVKDRQQGRSKYGVKKPK.

It belongs to the universal ribosomal protein uS12 family. As to quaternary structure, part of the 30S ribosomal subunit.

It localises to the plastid. Its subcellular location is the chloroplast. In terms of biological role, with S4 and S5 plays an important role in translational accuracy. Located at the interface of the 30S and 50S subunits. The polypeptide is Small ribosomal subunit protein uS12cz/uS12cy (rps12-A) (Nymphaea alba (White water-lily)).